A 550-amino-acid polypeptide reads, in one-letter code: DNA-directed RNA polymerase subunit alpha (550 aa).

An alpha N-terminal domain (alpha-NTD) region spans residues 1–333 (MTIYPNLKKI…QENNLFRSEK (333 aa)). The insert stretch occupies residues 185-258 (TTLKKRNILL…TSLGHDTVSN (74 aa)). Residues 378–550 (FLNQSLGQNK…SLTFEYARKF (173 aa)) are alpha C-terminal domain (alpha-CTD).

Belongs to the RNA polymerase alpha chain family. In terms of assembly, in plastids the minimal PEP RNA polymerase catalytic core is composed of four subunits: alpha, beta, beta', and beta''. When a (nuclear-encoded) sigma factor is associated with the core the holoenzyme is formed, which can initiate transcription.

It localises to the plastid. The protein resides in the chloroplast. It carries out the reaction RNA(n) + a ribonucleoside 5'-triphosphate = RNA(n+1) + diphosphate. In terms of biological role, DNA-dependent RNA polymerase catalyzes the transcription of DNA into RNA using the four ribonucleoside triphosphates as substrates. The protein is DNA-directed RNA polymerase subunit alpha (rpoA) of Chlamydomonas reinhardtii (Chlamydomonas smithii).